We begin with the raw amino-acid sequence, 96 residues long: UPF0213 protein BCE_0033 (96 aa).

The GIY-YIG domain maps to 4 to 79 (NKHCFYVVEC…KQLNRKQKEE (76 aa)).

This sequence belongs to the UPF0213 family.

The chain is UPF0213 protein BCE_0033 from Bacillus cereus (strain ATCC 10987 / NRS 248).